We begin with the raw amino-acid sequence, 266 residues long: Indole-3-glycerol phosphate synthase (266 aa).

The protein belongs to the TrpC family.

It catalyses the reaction 1-(2-carboxyphenylamino)-1-deoxy-D-ribulose 5-phosphate + H(+) = (1S,2R)-1-C-(indol-3-yl)glycerol 3-phosphate + CO2 + H2O. The protein operates within amino-acid biosynthesis; L-tryptophan biosynthesis; L-tryptophan from chorismate: step 4/5. This is Indole-3-glycerol phosphate synthase from Opitutus terrae (strain DSM 11246 / JCM 15787 / PB90-1).